We begin with the raw amino-acid sequence, 190 residues long: Holliday junction branch migration complex subunit RuvA (190 aa).

Residues 1-64 (MIGKLTGTLL…EDAQLLYGFG (64 aa)) are domain I. The tract at residues 65 to 143 (THSERQAFRE…ADTGAQSLFV (79 aa)) is domain II. The segment at 144–148 (NNDQN) is flexible linker. The tract at residues 148–190 (NDIVQALMALGYSDKDAAAALKKLPPDVGVTEGIKLALKALAK) is domain III.

Belongs to the RuvA family. As to quaternary structure, homotetramer. Forms an RuvA(8)-RuvB(12)-Holliday junction (HJ) complex. HJ DNA is sandwiched between 2 RuvA tetramers; dsDNA enters through RuvA and exits via RuvB. An RuvB hexamer assembles on each DNA strand where it exits the tetramer. Each RuvB hexamer is contacted by two RuvA subunits (via domain III) on 2 adjacent RuvB subunits; this complex drives branch migration. In the full resolvosome a probable DNA-RuvA(4)-RuvB(12)-RuvC(2) complex forms which resolves the HJ.

It is found in the cytoplasm. Its function is as follows. The RuvA-RuvB-RuvC complex processes Holliday junction (HJ) DNA during genetic recombination and DNA repair, while the RuvA-RuvB complex plays an important role in the rescue of blocked DNA replication forks via replication fork reversal (RFR). RuvA specifically binds to HJ cruciform DNA, conferring on it an open structure. The RuvB hexamer acts as an ATP-dependent pump, pulling dsDNA into and through the RuvAB complex. HJ branch migration allows RuvC to scan DNA until it finds its consensus sequence, where it cleaves and resolves the cruciform DNA. The polypeptide is Holliday junction branch migration complex subunit RuvA (Delftia acidovorans (strain DSM 14801 / SPH-1)).